A 256-amino-acid polypeptide reads, in one-letter code: Probable elongation factor 1-delta (256 aa).

Serine 37, serine 53, and serine 89 each carry phosphoserine. Residues 110-146 form a disordered region; it reads NGVSKEPEVEAKKPEANDDDDDVDLFGSDSEEEDGEA. The span at 114 to 125 shows a compositional bias: basic and acidic residues; that stretch reads KEPEVEAKKPEA. Residues 126 to 144 show a composition bias toward acidic residues; that stretch reads NDDDDDVDLFGSDSEEEDG. Residues serine 137 and serine 139 each carry the phosphoserine modification.

The protein belongs to the EF-1-beta/EF-1-delta family. In terms of assembly, EF-1 is composed of 4 subunits: alpha, beta, delta, and gamma.

Functionally, EF-1-beta and EF-1-delta stimulate the exchange of GDP bound to EF-1-alpha to GTP. The polypeptide is Probable elongation factor 1-delta (eEF1delta) (Drosophila melanogaster (Fruit fly)).